We begin with the raw amino-acid sequence, 110 residues long: Protein YcgL (110 aa).

The YcgL domain maps to 14–98 (MFCVIYRSSK…PPEDLLKQHL (85 aa)). The disordered stretch occupies residues 88-110 (PPPEDLLKQHLSSVGQNTSHADR). The span at 97 to 110 (HLSSVGQNTSHADR) shows a compositional bias: polar residues.

The sequence is that of Protein YcgL from Salmonella typhi.